A 1465-amino-acid chain; its full sequence is Transcriptional elongation regulator MINIYO (1465 aa).

3 disordered regions span residues K27–R85, L186–I211, and T1113–I1135.

The protein belongs to the RPAP1 family. As to quaternary structure, interacts with HAG3, NRPB3 and NRPB10L. Expressed in root and shoot apices and in leaf and flower primordia. Detected in the endosperm, embryo, meristems and in organ primordia, but not in mature cells. Found exclusively in the vascular bundles in mature leaves.

It localises to the cytoplasm. It is found in the nucleus. Its function is as follows. Positive regulator of transcriptional elongation that is essential for cells to initiate differentiation. Interacts with RNA polymerase II and the Elongator complex and is required to sustain global levels of transcriptional elongation activity, specifically in differentiating tissues. This Arabidopsis thaliana (Mouse-ear cress) protein is Transcriptional elongation regulator MINIYO.